The sequence spans 341 residues: Tryptophan--tRNA ligase (341 aa).

ATP contacts are provided by residues arginine 11–threonine 13 and glycine 19–histidine 20. Positions proline 12 to histidine 20 match the 'HIGH' region motif. Position 140 (aspartate 140) interacts with L-tryptophan. Residues glycine 152–aspartate 154, leucine 193, and lysine 201–serine 205 contribute to the ATP site. Residues lysine 201–serine 205 carry the 'KMSKS' region motif.

The protein belongs to the class-I aminoacyl-tRNA synthetase family. In terms of assembly, homodimer.

The protein resides in the cytoplasm. It carries out the reaction tRNA(Trp) + L-tryptophan + ATP = L-tryptophyl-tRNA(Trp) + AMP + diphosphate + H(+). Functionally, catalyzes the attachment of tryptophan to tRNA(Trp). This is Tryptophan--tRNA ligase from Clostridium longisporum.